The following is a 118-amino-acid chain: V-type proton ATPase subunit G 2 (118 aa).

Residues 26 to 90 (RKRKARRLKQ…VQGMQSSQQR (65 aa)) form a disordered region. Residues 35-55 (QAKEEAQMEVEQYRREREQEF) are compositionally biased toward basic and acidic residues. Composition is skewed to polar residues over residues 56–69 (QSKQ…QGNL) and 78–89 (RRQVQGMQSSQQ).

It belongs to the V-ATPase G subunit family. V-ATPase is a heteromultimeric enzyme made up of two complexes: the ATP-hydrolytic V1 complex and the proton translocation V0 complex. The V1 complex consists of three catalytic AB heterodimers that form a heterohexamer, three peripheral stalks each consisting of EG heterodimers, one central rotor including subunits D and F, and the regulatory subunits C and H. The proton translocation complex V0 consists of the proton transport subunit a, a ring of proteolipid subunits c9c'', rotary subunit d, subunits e and f, and the accessory subunits ATP6AP1/Ac45 and ATP6AP2/PRR.

Its subcellular location is the melanosome. It is found in the cytoplasmic vesicle. The protein localises to the clathrin-coated vesicle membrane. Its function is as follows. Subunit of the V1 complex of vacuolar(H+)-ATPase (V-ATPase), a multisubunit enzyme composed of a peripheral complex (V1) that hydrolyzes ATP and a membrane integral complex (V0) that translocates protons. V-ATPase is responsible for acidifying and maintaining the pH of intracellular compartments and in some cell types, is targeted to the plasma membrane, where it is responsible for acidifying the extracellular environment. The polypeptide is V-type proton ATPase subunit G 2 (ATP6V1G2) (Sus scrofa (Pig)).